Consider the following 287-residue polypeptide: Ribosomal RNA small subunit methyltransferase A (287 aa).

The S-adenosyl-L-methionine site is built by Asn-28, Leu-30, Gly-55, Glu-77, Asp-103, and Asn-123.

This sequence belongs to the class I-like SAM-binding methyltransferase superfamily. rRNA adenine N(6)-methyltransferase family. RsmA subfamily.

The protein resides in the cytoplasm. It catalyses the reaction adenosine(1518)/adenosine(1519) in 16S rRNA + 4 S-adenosyl-L-methionine = N(6)-dimethyladenosine(1518)/N(6)-dimethyladenosine(1519) in 16S rRNA + 4 S-adenosyl-L-homocysteine + 4 H(+). Functionally, specifically dimethylates two adjacent adenosines (A1518 and A1519) in the loop of a conserved hairpin near the 3'-end of 16S rRNA in the 30S particle. May play a critical role in biogenesis of 30S subunits. This is Ribosomal RNA small subunit methyltransferase A from Rhodopseudomonas palustris (strain HaA2).